A 311-amino-acid chain; its full sequence is Haloalkane dehalogenase (311 aa).

The 119-residue stretch at 30–148 (AIVFQHGNPS…WDDFPDEVAQ (119 aa)) folds into the AB hydrolase-1 domain. The Nucleophile role is filled by D107. The active-site Proton donor is the E131. H272 functions as the Proton acceptor in the catalytic mechanism.

Belongs to the haloalkane dehalogenase family. Type 2 subfamily. Monomer.

It catalyses the reaction 1-haloalkane + H2O = a halide anion + a primary alcohol + H(+). Catalyzes hydrolytic cleavage of carbon-halogen bonds in halogenated aliphatic compounds, leading to the formation of the corresponding primary alcohols, halide ions and protons. The polypeptide is Haloalkane dehalogenase (Mycolicibacterium smegmatis (strain ATCC 700084 / mc(2)155) (Mycobacterium smegmatis)).